A 675-amino-acid chain; its full sequence is MEVIQYPNSPFKLHQPFPPAGDQPTAIAGLLEGLSDGLAYQTLLGVTGSGKTYTMANVIAQSGRPAIIMAHNKTLAAQLYAEMREFFPENAVEYFVSYYDYYQPEAYVPSRDLFIEKDSAINEHIEQMRLSATKNLMTRNDVIIVATVSAIYGIGDPTEYQQMVLSVKEGDTIEQRDIIATLVSMQYERGDLDFKRGSFRVRGDVIDVYPAESSENALRISLFDDEIDRLDMFDPLSGSLIQRVGRYTVFPSSHYVTPRDTVLRACESIKEELRERIEFFAREQRPVEQQRIEQRTRFDLEMLYEMGFCKGIENYSRHFSGKKEGEPPPTLMDYLPDNAIMFIDESHVTVTQIGGMYKGDASRKQNLVDYGFRLPSARDNRPLKFHEFEKVMPQTIFVSATPAKYEEEHAGQVVEQVVRPTGLVDPQIIIRPVATQVDDLMSEINDRIEKGERVLVTTLTKRMAEQLTDYYSELGIKVRYLHSDIDTVERVEIIRDLRLGLFDVLVGINLLREGLDIPEVSLVAILDADKEGFLRSHRSLIQTIGRAARNVNGVAILYADKITDSMKAAIDETERRREKQIKFNEEQGIVPQQIKKQVKDIIDGVYHEEDGSKGRLKGKNKVKVGEIHNEEDAIKEIAKLEKAMQQAARDLQFEEAAVLRDRIRDIKENLLFGAE.

Residues 32 to 417 form the Helicase ATP-binding domain; the sequence is EGLSDGLAYQ…EHAGQVVEQV (386 aa). 45–52 contributes to the ATP binding site; sequence GVTGSGKT. A Beta-hairpin motif is present at residues 98–121; the sequence is YYDYYQPEAYVPSRDLFIEKDSAI. A Helicase C-terminal domain is found at 436–602; sequence QVDDLMSEIN…QIKKQVKDII (167 aa). The UVR domain maps to 634-669; that stretch reads IKEIAKLEKAMQQAARDLQFEEAAVLRDRIRDIKEN.

This sequence belongs to the UvrB family. In terms of assembly, forms a heterotetramer with UvrA during the search for lesions. Interacts with UvrC in an incision complex.

The protein resides in the cytoplasm. In terms of biological role, the UvrABC repair system catalyzes the recognition and processing of DNA lesions. A damage recognition complex composed of 2 UvrA and 2 UvrB subunits scans DNA for abnormalities. Upon binding of the UvrA(2)B(2) complex to a putative damaged site, the DNA wraps around one UvrB monomer. DNA wrap is dependent on ATP binding by UvrB and probably causes local melting of the DNA helix, facilitating insertion of UvrB beta-hairpin between the DNA strands. Then UvrB probes one DNA strand for the presence of a lesion. If a lesion is found the UvrA subunits dissociate and the UvrB-DNA preincision complex is formed. This complex is subsequently bound by UvrC and the second UvrB is released. If no lesion is found, the DNA wraps around the other UvrB subunit that will check the other stand for damage. The sequence is that of UvrABC system protein B from Neisseria meningitidis serogroup B (strain ATCC BAA-335 / MC58).